A 605-amino-acid polypeptide reads, in one-letter code: E3 ubiquitin-protein ligase synoviolin A (605 aa).

The chain crosses the membrane as a helical span at residues 1 to 19 (MTGASLALTAAVVAHAYYL). Over 20–35 (KNQFYPTVVYLTKSSP) the chain is Lumenal. Residues 36 to 56 (SMAVLYIQAFVLVFLLGKFMG) form a helical membrane-spanning segment. Topologically, residues 57–92 (KVFFGQLRAAEMEHLLERSWYAVTETCLAFTVFRDD) are cytoplasmic. Residues 93-113 (FSPRFVALFTLLLFLKCFHWL) form a helical membrane-spanning segment. The Lumenal segment spans residues 114–129 (AEDRVDFMERSPNISW). The chain crosses the membrane as a helical span at residues 130-150 (LFHFRILALMLLLGVLDAFFV). Residues 151-163 (SHAYHSLVIRGAS) are Cytoplasmic-facing. Residues 164 to 184 (VQLVFGFEYAILMTVILTVFI) form a helical membrane-spanning segment. Residues 185 to 218 (KYILHSVDLQSENPWDNKAVYMLYTELFTGFIKV) are Lumenal-facing. Residues 219–239 (LLYVAFMTIMVKVHTFPLFAI) form a helical membrane-spanning segment. An interaction with p53/TP53 region spans residues 230-264 (KVHTFPLFAIRPMYLAMRQFKKAVTDAIMSRRAIR). Over 240-605 (RPMYLAMRQF…KLETGTTDSQ (366 aa)) the chain is Cytoplasmic. Zn(2+) contacts are provided by C285, C288, C301, H303, H306, C309, C320, and C323. The RING-type; atypical zinc finger occupies 285-324 (CIICREEMVTGAKRLPCNHIFHTSCLRSWFQRQQTCPTCR). Over residues 334 to 355 (TQPQTPTEQQNQHQNQAQQQPT) the composition is skewed to low complexity. The disordered stretch occupies residues 334 to 433 (TQPQTPTEQQ…QPGAALPGFP (100 aa)). The span at 356–391 (PVIPPQPNFPPGILPPFPPGMFPLWPPMGPFPPVPG) shows a compositional bias: pro residues. A compositionally biased stretch (low complexity) spans 403 to 414 (PGSSSGSSPRPG). Over residues 415–424 (ETSNVGSESQ) the composition is skewed to polar residues. Positions 465 to 496 (EELRAMEGHERQNLEARLQCLQNIHTLLDAAM) form a coiled coil. A disordered region spans residues 513–605 (QPPISSTSTS…KLETGTTDSQ (93 aa)). Over residues 516–539 (ISSTSTSTSSAASASTAPTTSNIS) the composition is skewed to low complexity. Over residues 546 to 555 (DTTSTVTNTE) the composition is skewed to polar residues. The segment covering 556-579 (SSQQSAPPAPVSVETLSGAEGGET) has biased composition (low complexity).

Belongs to the HRD1 family. As to quaternary structure, homodimer.

The protein resides in the endoplasmic reticulum membrane. The catalysed reaction is S-ubiquitinyl-[E2 ubiquitin-conjugating enzyme]-L-cysteine + [acceptor protein]-L-lysine = [E2 ubiquitin-conjugating enzyme]-L-cysteine + N(6)-ubiquitinyl-[acceptor protein]-L-lysine.. The protein operates within protein modification; protein ubiquitination. Functionally, E3 ubiquitin-protein ligase which accepts ubiquitin specifically from endoplasmic reticulum-associated UBC7 E2 ligase and transfers it to substrates, promoting their degradation. Component of the endoplasmic reticulum quality control (ERQC) system also called ER-associated degradation (ERAD) involved in ubiquitin-dependent degradation of misfolded endoplasmic reticulum proteins. Also promotes the degradation of normal but naturally short-lived proteins. Protects cells from ER stress-induced apoptosis. Sequesters p53 in the cytoplasm and promotes its degradation, thereby negatively regulating its biological function in transcription, cell cycle regulation and apoptosis. This Xenopus laevis (African clawed frog) protein is E3 ubiquitin-protein ligase synoviolin A (syvn1-a).